The primary structure comprises 392 residues: DNA-directed RNA polymerase subunit Rpo1C (392 aa).

It belongs to the RNA polymerase beta' chain family. In terms of assembly, part of the RNA polymerase complex.

It localises to the cytoplasm. It carries out the reaction RNA(n) + a ribonucleoside 5'-triphosphate = RNA(n+1) + diphosphate. Functionally, DNA-dependent RNA polymerase (RNAP) catalyzes the transcription of DNA into RNA using the four ribonucleoside triphosphates as substrates. Forms part of the jaw domain. This Metallosphaera sedula (strain ATCC 51363 / DSM 5348 / JCM 9185 / NBRC 15509 / TH2) protein is DNA-directed RNA polymerase subunit Rpo1C.